Here is a 380-residue protein sequence, read N- to C-terminus: Putative T-box protein 40 (380 aa).

The segment at residues 11 to 192 (MAEEDRWLTQ…KNATFENRLD (182 aa)) is a DNA-binding region (T-box). The disordered stretch occupies residues 188–215 (ENRLDGGNKRKNTNSREEPSSKRSKNET). A compositionally biased stretch (basic and acidic residues) spans 189-215 (NRLDGGNKRKNTNSREEPSSKRSKNET).

The protein localises to the nucleus. In Caenorhabditis elegans, this protein is Putative T-box protein 40 (tbx-40).